A 76-amino-acid chain; its full sequence is Alpha/kappa-conotoxin pl14a (76 aa).

An N-terminal signal peptide occupies residues 1 to 24; the sequence is MPSVRSVTCCCLLWMMFSVQLVTP. Positions 25–39 are excised as a propeptide; sequence GSPGTAQLSGHRTAR. 2 cysteine pairs are disulfide-bonded: Cys46–Cys61 and Cys50–Cys63. Residue Arg64 is modified to Arginine amide. A propeptide spanning residues 65 to 76 is cleaved from the precursor; sequence GKRDAVSSSMAV.

It belongs to the conotoxin J superfamily. As to expression, expressed by the venom duct.

It is found in the secreted. Its function is as follows. Highly inhibits both nicotinic acetylcholine receptors (neuronal (IC(50)=8.7 uM for alpha-3/beta-4) and muscular (IC(50)=0.54 uM for alpha-1-beta-1-epsilon-delta (CHRNA1-CHRNB1-CHRND-CHRNE)) subtypes) and the voltage-gated potassium channel Kv1.6/KCNA6 subtype (IC(50)=1.59 uM). The polypeptide is Alpha/kappa-conotoxin pl14a (Conus planorbis (Planorbis cone)).